A 373-amino-acid polypeptide reads, in one-letter code: LIM domain-binding protein 2 (373 aa).

Disordered stretches follow at residues 244–291 (APPA…ANLS) and 327–373 (QYDA…QASQ). Over residues 263–280 (STSSTSNSSAGNNANSTG) the composition is skewed to low complexity. The region spanning 298–337 (DVMVVGEPTLMGGEFGDEDERLITRLENTQYDAANGMDDE) is the LIM interaction domain (LID) domain. Positions 341–361 (NNSPALGNNSPWNSKPPATQE) are enriched in polar residues.

This sequence belongs to the LDB family. Interacts with LHX9. Interacts with SLK; leading to negatively regulate SLK kinase activity. Interacts with LMO4. In terms of processing, ubiquitinated by RLIM/RNF12, leading to its degradation by the proteasome.

Its subcellular location is the nucleus. Functionally, transcription cofactor. Binds to the LIM domain of a wide variety of LIM domain-containing transcription factors. In Homo sapiens (Human), this protein is LIM domain-binding protein 2 (LDB2).